Reading from the N-terminus, the 450-residue chain is NADH-ubiquinone oxidoreductase chain 2 (450 aa).

13 helical membrane passes run 25–45 (GTITIMFTTMLFFLSMDIVAM), 58–78 (LTPYNLPLSFLMLSLIVMLLM), 90–110 (SPFYLLLLLTNMMGLLLFPLV), 113–133 (LIALYVVMELQSYSLYLLTGL), 145–165 (LLYFLMGGVASTIMLLASYFV), 186–206 (AFDYFDILLVALLFKMGMAPL), 219–239 (TYITAYISMVAKMSMVSWIFA), 248–268 (VTILFFYISLAMAAYKPLFQV), 272–292 (TMLAYSGMLNFSYILLSMMSY), 295–315 (AFYIYMIQYVLTHLILFLGML), 344–364 (LAFSLILALFSLIGMPPTPGF), 385–405 (AIVVCSVVATYYYANMIKVLF), and 414–436 (NFINPSLAFTMASATSLLFSFFM).

Belongs to the complex I subunit 2 family.

Its subcellular location is the mitochondrion inner membrane. It catalyses the reaction a ubiquinone + NADH + 5 H(+)(in) = a ubiquinol + NAD(+) + 4 H(+)(out). Its function is as follows. Core subunit of the mitochondrial membrane respiratory chain NADH dehydrogenase (Complex I) that is believed to belong to the minimal assembly required for catalysis. Complex I functions in the transfer of electrons from NADH to the respiratory chain. The immediate electron acceptor for the enzyme is believed to be ubiquinone. The sequence is that of NADH-ubiquinone oxidoreductase chain 2 (ND2) from Debaryomyces hansenii (strain ATCC 36239 / CBS 767 / BCRC 21394 / JCM 1990 / NBRC 0083 / IGC 2968) (Yeast).